Consider the following 370-residue polypeptide: MGAQPGEPQNTCSRIQTLFRRVKTLLIKAPPPPQPPPPPPSWNPGCTHVYGYAFGHMHDNNLEHLPSQQVLDTGEQLMVPVEVLEVDNKEALWKFLLSGAMAGAVSRTGTAPLDRAKVYMQVYSSKTNFTNLLGGLQSMVQEGGFRSLWRGNGINVLKIAPEYAIKFSVFEQCKNYFCGIQGSPPFQERLLAGSLAVAISQTLINPMEVLKTRLTLRRTGQYKGLLDCARQILQREGTRALYRGYLPNMLGIIPYACTDLAVYEMLQCFWVKSGRDMGDPSGLVSLSSVTLSTTCGQMASYPLTLVRTRMQAQDTVEGSNPTMRGVLQRILAQQGWLGLYRGMTPTLLKVLPAGGISYVVYEAMKKTLGI.

Solcar repeat units follow at residues 90-176 (EALW…CKNY), 184-269 (PPFQ…LQCF), and 280-367 (PSGL…MKKT). Transmembrane regions (helical) follow at residues 96–113 (LLSG…TAPL), 151–170 (GNGI…FSVF), 194–207 (SLAV…INPM), 245–263 (YLPN…LAVY), 282–306 (GLVS…LTLV), and 342–361 (GMTP…YVVY).

It belongs to the mitochondrial carrier (TC 2.A.29) family.

It localises to the mitochondrion inner membrane. The enzyme catalyses Mg(2+)(out) + phosphate(in) + ATP(out) = Mg(2+)(in) + phosphate(out) + ATP(in). It catalyses the reaction ADP(out) + phosphate(in) + H(+)(out) = ADP(in) + phosphate(out) + H(+)(in). Functionally, calcium-independent ATP-Mg/Pi exchanger that catalyzes the electroneutral exchange of Mg-ATP or free ADP against an hydrogenphosphate and participates in the net transport of adenine nucleotides across the mitochondria inner membrane. The polypeptide is Mitochondrial carrier protein SCaMC-3L (Homo sapiens (Human)).